A 203-amino-acid polypeptide reads, in one-letter code: Urease accessory protein UreG (203 aa).

Residue 13-20 (GPVGSGKT) coordinates GTP.

This sequence belongs to the SIMIBI class G3E GTPase family. UreG subfamily. Homodimer. UreD, UreF and UreG form a complex that acts as a GTP-hydrolysis-dependent molecular chaperone, activating the urease apoprotein by helping to assemble the nickel containing metallocenter of UreC. The UreE protein probably delivers the nickel.

The protein localises to the cytoplasm. Facilitates the functional incorporation of the urease nickel metallocenter. This process requires GTP hydrolysis, probably effectuated by UreG. This chain is Urease accessory protein UreG, found in Psychromonas ingrahamii (strain DSM 17664 / CCUG 51855 / 37).